Consider the following 177-residue polypeptide: Dihydrofolate reductase (177 aa).

The catalysed reaction is (6S)-5,6,7,8-tetrahydrofolate + NADP(+) = 7,8-dihydrofolate + NADPH + H(+). In terms of biological role, provides the tetrahydrofolates necessary for the synthesis of nucleotides and amino acids. Bacteriophage T5 induces high levels of dihydrofolate reductase in the host cell, probably for the viral replication. The protein is Dihydrofolate reductase of Escherichia phage T5 (Enterobacteria phage T5).